Reading from the N-terminus, the 65-residue chain is Large ribosomal subunit protein bL35 (65 aa).

The tract at residues 1 to 65 (MPKMKTNRAA…GRLDRMLPYL (65 aa)) is disordered. The span at 10–44 (AAKRFRKTASGKYKAGHANRSHILTKKATKRKRNL) shows a compositional bias: basic residues. The span at 50–65 (VRAEDAGRLDRMLPYL) shows a compositional bias: basic and acidic residues.

This sequence belongs to the bacterial ribosomal protein bL35 family.

This Xylella fastidiosa (strain M12) protein is Large ribosomal subunit protein bL35.